A 502-amino-acid polypeptide reads, in one-letter code: ATP synthase subunit alpha (502 aa).

ATP is bound at residue 169-176; sequence GDRQTGKT.

It belongs to the ATPase alpha/beta chains family. As to quaternary structure, F-type ATPases have 2 components, CF(1) - the catalytic core - and CF(0) - the membrane proton channel. CF(1) has five subunits: alpha(3), beta(3), gamma(1), delta(1), epsilon(1). CF(0) has three main subunits: a(1), b(2) and c(9-12). The alpha and beta chains form an alternating ring which encloses part of the gamma chain. CF(1) is attached to CF(0) by a central stalk formed by the gamma and epsilon chains, while a peripheral stalk is formed by the delta and b chains.

The protein resides in the cell inner membrane. The enzyme catalyses ATP + H2O + 4 H(+)(in) = ADP + phosphate + 5 H(+)(out). Functionally, produces ATP from ADP in the presence of a proton gradient across the membrane. The alpha chain is a regulatory subunit. In Geotalea daltonii (strain DSM 22248 / JCM 15807 / FRC-32) (Geobacter daltonii), this protein is ATP synthase subunit alpha.